Consider the following 803-residue polypeptide: Elongation factor G, mitochondrial (803 aa).

The N-terminal 24 residues, 1-24 (MVRPAQVRAFSGLARSATSTRLIP), are a transit peptide targeting the mitochondrion. One can recognise a tr-type G domain in the interval 102–388 (SKVRNIGIAA…GVCDYLPNPS (287 aa)). GTP contacts are provided by residues 111–118 (AHIDSGKT), 186–190 (DTPGH), and 240–243 (NKMD).

It belongs to the TRAFAC class translation factor GTPase superfamily. Classic translation factor GTPase family. EF-G/EF-2 subfamily.

It is found in the mitochondrion. The protein operates within protein biosynthesis; polypeptide chain elongation. Mitochondrial GTPase that catalyzes the GTP-dependent ribosomal translocation step during translation elongation. During this step, the ribosome changes from the pre-translocational (PRE) to the post-translocational (POST) state as the newly formed A-site-bound peptidyl-tRNA and P-site-bound deacylated tRNA move to the P and E sites, respectively. Catalyzes the coordinated movement of the two tRNA molecules, the mRNA and conformational changes in the ribosome. In Talaromyces marneffei (strain ATCC 18224 / CBS 334.59 / QM 7333) (Penicillium marneffei), this protein is Elongation factor G, mitochondrial (mef1).